The sequence spans 304 residues: E3 ubiquitin-protein ligase CCNB1IP1 homolog (304 aa).

The RING-type; degenerate zinc-finger motif lies at 3 to 42 (CNACWRDLEGRAISTTCGHLLCTEDASKILSNDGACPICD). Residues 124-184 (TAYQKMGKRC…YESVKRTAIQ (61 aa)) adopt a coiled-coil conformation. The tract at residues 218–279 (SFFSPATPGP…GGGGTANPQS (62 aa)) is disordered. Residues 235–250 (RQNSSNSGPFDISTDS) are compositionally biased toward polar residues.

As to expression, expressed mostly in flower buds and roots.

The protein localises to the nucleus. It localises to the chromosome. The catalysed reaction is S-ubiquitinyl-[E2 ubiquitin-conjugating enzyme]-L-cysteine + [acceptor protein]-L-lysine = [E2 ubiquitin-conjugating enzyme]-L-cysteine + N(6)-ubiquitinyl-[acceptor protein]-L-lysine.. The protein operates within protein modification; protein ubiquitination. Functionally, ubiquitin E3 ligase required for class I crossover (CO) formation during meiosis. This Arabidopsis thaliana (Mouse-ear cress) protein is E3 ubiquitin-protein ligase CCNB1IP1 homolog (HEI10).